The sequence spans 233 residues: Eosinophil granule major basic protein 1 (233 aa).

Positions 1–15 (MKLLLLLALLLGAVS) are cleaved as a signal peptide. Positions 16–114 (TRHLKVDTSS…VKFFSRPGYK (99 aa)) are cleaved as a propeptide — acidic. The segment at 24 to 96 (SSLQSLRGEE…SELDVSPEDI (73 aa)) is disordered. The segment covering 42-57 (AEGATREATAGALMPL) has biased composition (low complexity). Residues 58–93 (PEEEEMEGASGSEDDPEEEEEEEEEVEFSSELDVSP) are compositionally biased toward acidic residues. The 102-residue stretch at 132 to 233 (WVCQRCYRGN…GKRRPFVCTY (102 aa)) folds into the C-type lectin domain. 2 cysteine pairs are disulfide-bonded: Cys-134–Cys-231 and Cys-208–Cys-223.

In terms of processing, nitrated.

It localises to the cytoplasmic granule. In terms of biological role, MBP may play some important roles in the allergic reactions and inflammations, since MBP is capable of releasing histamine from mast cells and damaging the epithelial cells of bronchial tubes. Antiparasitic and antibiotic. The protein is Eosinophil granule major basic protein 1 (MBP1) of Cavia porcellus (Guinea pig).